The primary structure comprises 259 residues: Imidazole glycerol phosphate synthase subunit HisF (259 aa).

Residues Asp11 and Asp130 contribute to the active site.

This sequence belongs to the HisA/HisF family. As to quaternary structure, heterodimer of HisH and HisF.

It is found in the cytoplasm. The catalysed reaction is 5-[(5-phospho-1-deoxy-D-ribulos-1-ylimino)methylamino]-1-(5-phospho-beta-D-ribosyl)imidazole-4-carboxamide + L-glutamine = D-erythro-1-(imidazol-4-yl)glycerol 3-phosphate + 5-amino-1-(5-phospho-beta-D-ribosyl)imidazole-4-carboxamide + L-glutamate + H(+). Its pathway is amino-acid biosynthesis; L-histidine biosynthesis; L-histidine from 5-phospho-alpha-D-ribose 1-diphosphate: step 5/9. Its function is as follows. IGPS catalyzes the conversion of PRFAR and glutamine to IGP, AICAR and glutamate. The HisF subunit catalyzes the cyclization activity that produces IGP and AICAR from PRFAR using the ammonia provided by the HisH subunit. The chain is Imidazole glycerol phosphate synthase subunit HisF from Desulfovibrio desulfuricans (strain ATCC 27774 / DSM 6949 / MB).